Reading from the N-terminus, the 311-residue chain is L-lactate dehydrogenase 2 (311 aa).

The NAD(+) site is built by valine 14, aspartate 35, and arginine 40. Arginine 90 contacts substrate. NAD(+)-binding positions include serine 103, 120–122 (ATN), and threonine 145. 122–125 (NPCD) provides a ligand contact to substrate. 150–153 (DTTR) provides a ligand contact to substrate. The Proton acceptor role is filled by histidine 177. Threonine 230 is a substrate binding site.

Belongs to the LDH/MDH superfamily. LDH family. Homotetramer.

It localises to the cytoplasm. It carries out the reaction (S)-lactate + NAD(+) = pyruvate + NADH + H(+). Its pathway is fermentation; pyruvate fermentation to lactate; (S)-lactate from pyruvate: step 1/1. In terms of biological role, catalyzes the conversion of lactate to pyruvate. In Listeria innocua serovar 6a (strain ATCC BAA-680 / CLIP 11262), this protein is L-lactate dehydrogenase 2.